The sequence spans 369 residues: Anhydro-N-acetylmuramic acid kinase (369 aa).

Gly12 to Asp19 lines the ATP pocket.

The protein belongs to the anhydro-N-acetylmuramic acid kinase family.

The enzyme catalyses 1,6-anhydro-N-acetyl-beta-muramate + ATP + H2O = N-acetyl-D-muramate 6-phosphate + ADP + H(+). The protein operates within amino-sugar metabolism; 1,6-anhydro-N-acetylmuramate degradation. It functions in the pathway cell wall biogenesis; peptidoglycan recycling. In terms of biological role, catalyzes the specific phosphorylation of 1,6-anhydro-N-acetylmuramic acid (anhMurNAc) with the simultaneous cleavage of the 1,6-anhydro ring, generating MurNAc-6-P. Is required for the utilization of anhMurNAc either imported from the medium or derived from its own cell wall murein, and thus plays a role in cell wall recycling. This chain is Anhydro-N-acetylmuramic acid kinase, found in Shewanella sp. (strain MR-7).